A 121-amino-acid chain; its full sequence is Acidic phospholipase A2 PLA-1 (121 aa).

7 cysteine pairs are disulfide-bonded: C26–C115, C28–C44, C43–C95, C49–C121, C50–C88, C57–C81, and C75–C86. Y27, G29, and G31 together coordinate Ca(2+). H47 is an active-site residue. D48 is a binding site for Ca(2+). D89 is a catalytic residue.

Belongs to the phospholipase A2 family. Group II subfamily. D49 sub-subfamily. Ca(2+) serves as cofactor. As to expression, expressed by the venom gland.

It localises to the secreted. The enzyme catalyses a 1,2-diacyl-sn-glycero-3-phosphocholine + H2O = a 1-acyl-sn-glycero-3-phosphocholine + a fatty acid + H(+). Its function is as follows. PLA2 catalyzes the calcium-dependent hydrolysis of the 2-acyl groups in 3-sn-phosphoglycerides. The polypeptide is Acidic phospholipase A2 PLA-1 (Eristicophis macmahoni (Leaf-nosed viper)).